Consider the following 267-residue polypeptide: Mlc titration factor A (267 aa).

Zn(2+) is bound by residues histidine 111, histidine 148, histidine 152, and glutamate 211.

Belongs to the MtfA family. As to quaternary structure, interacts with Mlc. Zn(2+) is required as a cofactor.

The protein localises to the cytoplasm. Functionally, involved in the modulation of the activity of the glucose-phosphotransferase system (glucose-PTS). Interacts with the transcriptional repressor Mlc, preventing its interaction with DNA and leading to the modulation of expression of genes regulated by Mlc, including ptsG, which encodes the PTS system glucose-specific EIICB component. Its function is as follows. Shows zinc-dependent metallopeptidase activity. This chain is Mlc titration factor A, found in Yersinia enterocolitica serotype O:8 / biotype 1B (strain NCTC 13174 / 8081).